A 611-amino-acid polypeptide reads, in one-letter code: Putative clathrin assembly protein At4g02650 (611 aa).

One can recognise an ENTH domain in the interval 26 to 162 (GRSSSLTELE…DYRMQGRRGK (137 aa)). 2 disordered regions span residues 158–184 (GRRGKKKSGGGGGGDGDSGEEDDHRGT) and 337–406 (TTKS…GDLL). Over residues 386-401 (METKKDVEEVVSRQDQ) the composition is skewed to basic and acidic residues.

It is found in the membrane. It localises to the clathrin-coated pit. The protein localises to the golgi apparatus. The protein resides in the cytoplasmic vesicle. Its subcellular location is the clathrin-coated vesicle. The chain is Putative clathrin assembly protein At4g02650 from Arabidopsis thaliana (Mouse-ear cress).